Consider the following 273-residue polypeptide: Dermonecrotic toxin SdSicTox-betaIF1 (273 aa).

The active site involves His5. Mg(2+)-binding residues include Glu25 and Asp27. His41 serves as the catalytic Nucleophile. Cystine bridges form between Cys45/Cys51 and Cys47/Cys189.

It belongs to the arthropod phospholipase D family. Class II subfamily. Requires Mg(2+) as cofactor. As to expression, expressed by the venom gland.

Its subcellular location is the secreted. The catalysed reaction is an N-(acyl)-sphingosylphosphocholine = an N-(acyl)-sphingosyl-1,3-cyclic phosphate + choline. The enzyme catalyses an N-(acyl)-sphingosylphosphoethanolamine = an N-(acyl)-sphingosyl-1,3-cyclic phosphate + ethanolamine. It catalyses the reaction a 1-acyl-sn-glycero-3-phosphocholine = a 1-acyl-sn-glycero-2,3-cyclic phosphate + choline. It carries out the reaction a 1-acyl-sn-glycero-3-phosphoethanolamine = a 1-acyl-sn-glycero-2,3-cyclic phosphate + ethanolamine. Dermonecrotic toxins cleave the phosphodiester linkage between the phosphate and headgroup of certain phospholipids (sphingolipid and lysolipid substrates), forming an alcohol (often choline) and a cyclic phosphate. This toxin acts on sphingomyelin (SM). It may also act on ceramide phosphoethanolamine (CPE), lysophosphatidylcholine (LPC) and lysophosphatidylethanolamine (LPE), but not on lysophosphatidylserine (LPS), and lysophosphatidylglycerol (LPG). It acts by transphosphatidylation, releasing exclusively cyclic phosphate products as second products. Induces dermonecrosis, hemolysis, increased vascular permeability, edema, inflammatory response, and platelet aggregation. The chain is Dermonecrotic toxin SdSicTox-betaIF1 from Sicarius cf. damarensis (strain GJB-2008) (Six-eyed sand spider).